The sequence spans 274 residues: Diaminopimelate epimerase (274 aa).

Substrate contacts are provided by asparagine 13, glutamine 45, and asparagine 63. Catalysis depends on cysteine 72, which acts as the Proton donor. Substrate contacts are provided by residues 73–74 (GN), asparagine 158, asparagine 191, and 209–210 (ER). The active-site Proton acceptor is cysteine 218. Residue 219–220 (GT) coordinates substrate.

The protein belongs to the diaminopimelate epimerase family. As to quaternary structure, homodimer.

The protein resides in the cytoplasm. It catalyses the reaction (2S,6S)-2,6-diaminopimelate = meso-2,6-diaminopimelate. The protein operates within amino-acid biosynthesis; L-lysine biosynthesis via DAP pathway; DL-2,6-diaminopimelate from LL-2,6-diaminopimelate: step 1/1. Its function is as follows. Catalyzes the stereoinversion of LL-2,6-diaminopimelate (L,L-DAP) to meso-diaminopimelate (meso-DAP), a precursor of L-lysine and an essential component of the bacterial peptidoglycan. The polypeptide is Diaminopimelate epimerase (Pelagibacter ubique (strain HTCC1062)).